Here is a 372-residue protein sequence, read N- to C-terminus: MDRLLQPPSSHSIAPSKFQSRPSPLLLHRLHSTNLSTFPSSRRLESRRISSISCFFRQNPSPDTSPGLNQSSNFLIASSQTDASKPNPGFIQRIVSSFEQRKTISAGMVILVSAIAALLLNPILVPPAFASFQTATNSGGAAVVGGKLLRTEVLTSAWTGFFAGCLHTLSGPDHLAALAPLSIGRTRMESAAVGALWGCGHDAGQLIFGLLFLLLKDRLHIEVIRTWGTRVVGLTLLVIGAMGIKEASEMPEPCVVTLENGETDEKSLKKKKIGFATFATGIVHGLQPDALMMVLPALALPSRIAGASFLIMFLIGTVIAMGSYTVFIGSCSEALKEKVPRITEKLTWASSLVAIGLGLAIIVSQFFGFSLY.

Residues 1–20 (MDRLLQPPSSHSIAPSKFQS) are disordered. A chloroplast-targeting transit peptide spans 1–78 (MDRLLQPPSS…NQSSNFLIAS (78 aa)). Over residues 7-20 (PPSSHSIAPSKFQS) the composition is skewed to polar residues. 7 consecutive transmembrane segments (helical) span residues 109–129 (VILVSAIAALLLNPILVPPAF), 161–181 (FFAGCLHTLSGPDHLAALAPL), 195–215 (ALWGCGHDAGQLIFGLLFLLL), 231–251 (VVGLTLLVIGAMGIKEASEMP), 281–301 (GIVHGLQPDALMMVLPALALP), 309–329 (FLIMFLIGTVIAMGSYTVFIG), and 352–372 (LVAIGLGLAIIVSQFFGFSLY).

Mostly expressed in leaves, stems and flowers, to a lower extent, in roots, floral bud, inflorescence and siliques, and, barely, in seedlings.

It is found in the plastid. The protein resides in the chloroplast membrane. The protein localises to the plastid membrane. Together with CGF1, essential protein which supports female gametogenesis and embryogenesis, probably by securing local energy supply. The protein is Chloroplast protein FOR GROWTH AND FERTILITY 2 of Arabidopsis thaliana (Mouse-ear cress).